Reading from the N-terminus, the 68-residue chain is MGSFSIWHWLIVLAVVLLLFGRGKIPELMGDVAKGIKNFKKGMSDEDAAAADKSIDGKTVDHKSDEVR.

Residues 1–21 form a helical membrane-spanning segment; that stretch reads MGSFSIWHWLIVLAVVLLLFG. Residues 48–68 form a disordered region; it reads AAAADKSIDGKTVDHKSDEVR. A compositionally biased stretch (basic and acidic residues) spans 53-68; the sequence is KSIDGKTVDHKSDEVR.

It belongs to the TatA/E family. In terms of assembly, the Tat system comprises two distinct complexes: a TatABC complex, containing multiple copies of TatA, TatB and TatC subunits, and a separate TatA complex, containing only TatA subunits. Substrates initially bind to the TatABC complex, which probably triggers association of the separate TatA complex to form the active translocon.

It localises to the cell inner membrane. Its function is as follows. Part of the twin-arginine translocation (Tat) system that transports large folded proteins containing a characteristic twin-arginine motif in their signal peptide across membranes. TatA could form the protein-conducting channel of the Tat system. The polypeptide is Sec-independent protein translocase protein TatA (Sinorhizobium medicae (strain WSM419) (Ensifer medicae)).